Consider the following 134-residue polypeptide: ATP synthase epsilon chain (134 aa).

This sequence belongs to the ATPase epsilon chain family. F-type ATPases have 2 components, CF(1) - the catalytic core - and CF(0) - the membrane proton channel. CF(1) has five subunits: alpha(3), beta(3), gamma(1), delta(1), epsilon(1). CF(0) has three main subunits: a, b and c.

It localises to the cell membrane. Its function is as follows. Produces ATP from ADP in the presence of a proton gradient across the membrane. This chain is ATP synthase epsilon chain, found in Alkaliphilus metalliredigens (strain QYMF).